Consider the following 235-residue polypeptide: Transmembrane protein 176A (235 aa).

Residue Ser-38 is modified to Phosphoserine. The next 4 membrane-spanning stretches (helical) occupy residues Val-55–Phe-75, Ser-86–Tyr-106, Tyr-113–Leu-133, and Ala-193–Tyr-213.

This sequence belongs to the TMEM176 family. Interacts with MCOLN2.

The protein localises to the membrane. The polypeptide is Transmembrane protein 176A (TMEM176A) (Homo sapiens (Human)).